A 231-amino-acid chain; its full sequence is MKWEEWKPFYERIVKEMGYSIEEDRRAAELLRDILMENDNYIIKEELNSIIMQKVYVFGAGPNLEEALKKGDFKDGTKIAADGATSALLEYGITPDVVVTDLDGRIRDLLEASRKAVMVVHAHGDNMDKLPLVVEFPLVLGTCQTEPLDIVYNFGGFTDGDRAAFLAEEMGAKEIVLVGFDFSGIVGKWSKPWLRDHTPAWESKMKKLKFARELLEWLKNNGRAKIIEFSI.

It belongs to the archaeal 6-HMPDK family. It depends on Mg(2+) as a cofactor.

It carries out the reaction 6-hydroxymethyl-7,8-dihydropterin + ATP = (7,8-dihydropterin-6-yl)methyl diphosphate + AMP + H(+). Functionally, catalyzes the transfer of diphosphate from ATP to 6-hydroxymethyl-7,8-dihydropterin (6-HMD), leading to 6-hydroxymethyl-7,8-dihydropterin diphosphate (6-HMDP). To a lesser extent, can also use CTP, UTP, and GTP as the nucleotide triphosphate substrate. The sequence is that of 6-hydroxymethyl-7,8-dihydropterin pyrophosphokinase from Pyrococcus furiosus (strain ATCC 43587 / DSM 3638 / JCM 8422 / Vc1).